Consider the following 62-residue polypeptide: Large ribosomal subunit protein bL28 (62 aa).

It belongs to the bacterial ribosomal protein bL28 family.

The protein is Large ribosomal subunit protein bL28 of Aster yellows witches'-broom phytoplasma (strain AYWB).